The following is a 321-amino-acid chain: Probable DNA polymerase III subunit delta (321 aa).

The protein belongs to the DNA polymerase HolA subunit family. As to quaternary structure, component of the DNA clamp loading complex consisting of tau(3):delta(1):delta'(1). The DNA polymerase III holoenzyme complex contains at least 10 different subunits organized into 3 functionally essential subassemblies: the Pol III core, the beta sliding clamp processivity factor and the clamp-loading complex. The Pol III core (subunits alpha, epsilon and theta) contains the polymerase and the 3'-5' exonuclease proofreading activities. The polymerase is tethered to the template via the dimeric beta sliding clamp processivity factor. The DNA clamp-loading complex assembles the beta sliding clamp onto the primed template and plays a central role in the organization and communication at the replication fork.

It carries out the reaction DNA(n) + a 2'-deoxyribonucleoside 5'-triphosphate = DNA(n+1) + diphosphate. Part of the beta sliding clamp loading complex, which hydrolyzes ATP to load the beta clamp onto primed DNA to form the DNA replication pre-initiation complex. DNA polymerase III is a complex, multichain enzyme responsible for most of the replicative synthesis in bacteria. This DNA polymerase also exhibits 3'-5' exonuclease activity. The delta subunit is the wrench that will open the beta subunit dimer. The DNA clamp loading complex (tau(3),delta,delta') is thought to load beta dimers onto DNA by binding ATP which alters the complex's conformation so it can bind beta sliding clamp dimers and open them at one interface. Primed DNA is recognized, ATP is hydrolyzed releasing the clamp loading complex and closing the beta sliding clamp ring around the primed DNA. The polypeptide is Probable DNA polymerase III subunit delta (Rickettsia prowazekii (strain Madrid E)).